Reading from the N-terminus, the 377-residue chain is Membrane protein MLC1 (377 aa).

The span at 1 to 23 shows a compositional bias: basic and acidic residues; sequence MTQEPFREELAYDRMPTLERGRQ. The tract at residues 1-36 is disordered; the sequence is MTQEPFREELAYDRMPTLERGRQDPASYAPDAKPSD. 4 helical membrane passes run 52–72, 82–100, 111–131, and 144–164; these read WVFS…SLYL, YLRC…SFTV, FQIL…WFGC, and FNLI…IIAA. Phosphoserine is present on residues Ser-177 and Ser-179. Transmembrane regions (helical) follow at residues 199 to 219, 230 to 250, 257 to 277, and 304 to 324; these read SVVE…ALNV, VTFF…HVAA, LVEV…TASG, and LLLL…GTAI.

In terms of assembly, interacts with ATP1B1. Part of a complex containing ATP1B1, TRPV4, AQP4 and HEPACAM. In terms of tissue distribution, expressed in the brain, with highest levels found in the amygdala, nucleus caudatus, thalamus and hippocampus.

It is found in the membrane. The protein localises to the cell membrane. It localises to the cytoplasm. Its subcellular location is the perinuclear region. The protein resides in the endoplasmic reticulum. Its function is as follows. Transmembrane protein mainly expressed in brain astrocytes that may play a role in transport across the blood-brain and brain-cerebrospinal fluid barriers. Regulates the response of astrocytes to hypo-osmosis by promoting calcium influx. May function as regulatory protein of membrane protein complexes such as ion channels. The sequence is that of Membrane protein MLC1 from Homo sapiens (Human).